Reading from the N-terminus, the 138-residue chain is Large ribosomal subunit protein uL16 (138 aa).

Belongs to the universal ribosomal protein uL16 family. In terms of assembly, part of the 50S ribosomal subunit.

Its function is as follows. Binds 23S rRNA and is also seen to make contacts with the A and possibly P site tRNAs. This chain is Large ribosomal subunit protein uL16, found in Acholeplasma laidlawii (strain PG-8A).